A 93-amino-acid chain; its full sequence is Serine rich endogenous peptide 6 (93 aa).

The N-terminal stretch at 1–27 (MGTKCYSKLRYVVVLVLLLFVFPCSLS) is a signal peptide. Short sequence motifs (SCOOP motif) lie at residues 48–62 (GIIA…APNI) and 73–87 (ISEA…GGGR). The segment at 52 to 93 (GSSPSGQAPNINNNYHGRRLMISEARPSKSKKGGGREPESPG) is disordered. Residues 53 to 66 (SSPSGQAPNINNNY) show a composition bias toward polar residues. 2 short sequence motifs (sxS motif essential for MIK2 binding) span residues 54-56 (SPS) and 79-81 (SKS).

It belongs to the serine rich endogenous peptide (SCOOP) phytocytokine family. As to quaternary structure, interacts with MIK2 (via extracellular leucine-rich repeat domain); this interaction triggers the formation of complex between MIK2 and the BAK1/SERK3 and SERK4 coreceptors, and subsequent BAK1 activation by phosphorylation. Mostly expressed in seedlings shoots, and, to a lower extent, in roots.

Its subcellular location is the cell membrane. The protein resides in the secreted. The protein localises to the extracellular space. It is found in the apoplast. Brassicaceae-specific phytocytokine (plant endogenous peptide released into the apoplast) perceived by MIK2 in a BAK1/SERK3 and SERK4 coreceptors-dependent manner, that modulates various physiological and antimicrobial processes including growth prevention and reactive oxygen species (ROS) response regulation. Inhibits root growth. This Arabidopsis thaliana (Mouse-ear cress) protein is Serine rich endogenous peptide 6.